The chain runs to 49 residues: Cytochrome b559 subunit beta (49 aa).

A helical membrane pass occupies residues 24 to 40; sequence WLAVHVLGVPTVFFLGA. A heme-binding site is contributed by His-28.

The protein belongs to the PsbE/PsbF family. As to quaternary structure, heterodimer of an alpha subunit and a beta subunit. PSII is composed of 1 copy each of membrane proteins PsbA, PsbB, PsbC, PsbD, PsbE, PsbF, PsbH, PsbI, PsbJ, PsbK, PsbL, PsbM, PsbT, PsbX, PsbY, Psb30/Ycf12, peripheral proteins PsbO, CyanoQ (PsbQ), PsbU, PsbV and a large number of cofactors. It forms dimeric complexes. It depends on heme b as a cofactor.

It is found in the cellular thylakoid membrane. This b-type cytochrome is tightly associated with the reaction center of photosystem II (PSII). PSII is a light-driven water:plastoquinone oxidoreductase that uses light energy to abstract electrons from H(2)O, generating O(2) and a proton gradient subsequently used for ATP formation. It consists of a core antenna complex that captures photons, and an electron transfer chain that converts photonic excitation into a charge separation. The sequence is that of Cytochrome b559 subunit beta from Prochlorococcus marinus (strain MIT 9303).